A 284-amino-acid polypeptide reads, in one-letter code: 4-diphosphocytidyl-2-C-methyl-D-erythritol kinase (284 aa).

Lys14 is a catalytic residue. ATP is bound at residue 97-107 (PMGGGLGGGSS). Asp139 is an active-site residue.

Belongs to the GHMP kinase family. IspE subfamily.

It carries out the reaction 4-CDP-2-C-methyl-D-erythritol + ATP = 4-CDP-2-C-methyl-D-erythritol 2-phosphate + ADP + H(+). It functions in the pathway isoprenoid biosynthesis; isopentenyl diphosphate biosynthesis via DXP pathway; isopentenyl diphosphate from 1-deoxy-D-xylulose 5-phosphate: step 3/6. Catalyzes the phosphorylation of the position 2 hydroxy group of 4-diphosphocytidyl-2C-methyl-D-erythritol. This is 4-diphosphocytidyl-2-C-methyl-D-erythritol kinase from Psychromonas ingrahamii (strain DSM 17664 / CCUG 51855 / 37).